A 283-amino-acid polypeptide reads, in one-letter code: Putative aquaporin NIP4-1 (283 aa).

Residue methionine 1 is modified to N-acetylmethionine. The next 2 membrane-spanning stretches (helical) occupy residues 45-65 (LIAE…VVVV) and 70-90 (GGTI…MVMI). Positions 102 to 104 (NPA) match the NPA 1 motif. Transmembrane regions (helical) follow at residues 122–142 (LYIG…RLMF), 161–181 (ALVA…GVAT), and 189–209 (LAGI…GPIS). Positions 214-216 (NPA) match the NPA 2 motif. The chain crosses the membrane as a helical span at residues 231-251 (IWVYIVGPVLGVISGGFVYNL). Serine 267 bears the Phosphoserine mark.

The protein belongs to the MIP/aquaporin (TC 1.A.8) family. NIP (TC 1.A.8.12) subfamily.

It is found in the membrane. Its function is as follows. Potential aquaporin, which may facilitate the transport of water and small neutral solutes across cell membranes. This is Putative aquaporin NIP4-1 (NIP4-1) from Arabidopsis thaliana (Mouse-ear cress).